The sequence spans 692 residues: MAREFSLDKTRNIGIMAHIDAGKTTTTERILYYTGRIHKIGETHEGASQMDWMEQEQERGITITSAATTAQWKGYRVNIIDTPGHVDFTVEVERSLRVLDGAVAVLDAQSGVEPQTETVWRQATTYGVPRIVFVNKMDKTGADFLYSVSTLRDRLQANAHAIQLPIGAEDQFEGIIDLVDNVAYFYEDDLGTRSDAQEIPAEYKDKAEELRNSLIEAVAELDEELMEKYLEGEEITIPELKAAIRKGTLNVEFYPVLVGSAFKNKGVQLVLDAVLDYLPAPTDVAAIKGILPDSNEEVVRESTDDAPFSALAFKVMTDPYVGKLTFFRVYSGTLASGSYVKNSSKNKRERVGRILQMHANSREEISTVYAGDIAAAVGLKDTSTGDTLCDEKDTVILESMEFPEPVIDVAIEPKSKADQDKMGIALAKLAEEDPTFRTQTNPETGQTIISGMGELHLDIIVDRMKREFKVEANVGAPQVAYRETFRSGAKVEGKFVRQSGGRGQFGHVWIEFEPNEEGAGFEFENAIVGGVVPREYIPAIQAGLEDSLENGVLAGFPLIDIKAKLFDGSYHDVDSNEMAFKIAASMALKNAVSKCNPVLLEPMMKVEVVIPEEYMGDIMGDITSRRGRVEGMEARGNAQVVRAMVPLSEMFGYATSLRSNTQGRGTFTMHMDHYEEVPKSISEEIIKKNKGE.

A tr-type G domain is found at 8–282; sequence DKTRNIGIMA…AVLDYLPAPT (275 aa). Residues 17–24, 81–85, and 135–138 each bind GTP; these read AHIDAGKT, DTPGH, and NKMD.

The protein belongs to the TRAFAC class translation factor GTPase superfamily. Classic translation factor GTPase family. EF-G/EF-2 subfamily.

Its subcellular location is the cytoplasm. Its function is as follows. Catalyzes the GTP-dependent ribosomal translocation step during translation elongation. During this step, the ribosome changes from the pre-translocational (PRE) to the post-translocational (POST) state as the newly formed A-site-bound peptidyl-tRNA and P-site-bound deacylated tRNA move to the P and E sites, respectively. Catalyzes the coordinated movement of the two tRNA molecules, the mRNA and conformational changes in the ribosome. The chain is Elongation factor G from Bacillus pumilus (strain SAFR-032).